The primary structure comprises 166 residues: Lipoprotein signal peptidase (166 aa).

A run of 4 helical transmembrane segments spans residues 9-29 (ASGA…FDQL), 45-65 (ALTS…FGFL), 71-91 (WQRW…CFLL), and 100-120 (FSVS…DRLV). Catalysis depends on residues Asp126 and Asp144. The chain crosses the membrane as a helical span at residues 135–155 (WHFPAFNLADSAITIGAVLLI).

The protein belongs to the peptidase A8 family.

It localises to the cell inner membrane. The catalysed reaction is Release of signal peptides from bacterial membrane prolipoproteins. Hydrolyzes -Xaa-Yaa-Zaa-|-(S,diacylglyceryl)Cys-, in which Xaa is hydrophobic (preferably Leu), and Yaa (Ala or Ser) and Zaa (Gly or Ala) have small, neutral side chains.. Its pathway is protein modification; lipoprotein biosynthesis (signal peptide cleavage). This protein specifically catalyzes the removal of signal peptides from prolipoproteins. This is Lipoprotein signal peptidase from Burkholderia cenocepacia (strain ATCC BAA-245 / DSM 16553 / LMG 16656 / NCTC 13227 / J2315 / CF5610) (Burkholderia cepacia (strain J2315)).